The following is a 384-amino-acid chain: PqqA peptide cyclase (384 aa).

The Radical SAM core domain occupies 5-220 (VGLPLWLLAE…TNEYREKLKA (216 aa)). Residues C19, C23, and C26 each contribute to the [4Fe-4S] cluster site.

The protein belongs to the radical SAM superfamily. PqqE family. Interacts with PqqD. The interaction is necessary for activity of PqqE. Requires [4Fe-4S] cluster as cofactor.

It carries out the reaction [PQQ precursor protein] + S-adenosyl-L-methionine = E-Y cross-linked-[PQQ precursor protein] + 5'-deoxyadenosine + L-methionine + H(+). The protein operates within cofactor biosynthesis; pyrroloquinoline quinone biosynthesis. Functionally, catalyzes the cross-linking of a glutamate residue and a tyrosine residue in the PqqA protein as part of the biosynthesis of pyrroloquinoline quinone (PQQ). In Acinetobacter baumannii (strain AB0057), this protein is PqqA peptide cyclase.